Reading from the N-terminus, the 200-residue chain is Peptidyl-tRNA hydrolase (200 aa).

Residue Tyr-15 coordinates tRNA. The active-site Proton acceptor is the His-20. Positions 66, 68, and 114 each coordinate tRNA.

This sequence belongs to the PTH family. Monomer.

The protein localises to the cytoplasm. The enzyme catalyses an N-acyl-L-alpha-aminoacyl-tRNA + H2O = an N-acyl-L-amino acid + a tRNA + H(+). Hydrolyzes ribosome-free peptidyl-tRNAs (with 1 or more amino acids incorporated), which drop off the ribosome during protein synthesis, or as a result of ribosome stalling. Its function is as follows. Catalyzes the release of premature peptidyl moieties from peptidyl-tRNA molecules trapped in stalled 50S ribosomal subunits, and thus maintains levels of free tRNAs and 50S ribosomes. The chain is Peptidyl-tRNA hydrolase from Paraburkholderia phytofirmans (strain DSM 17436 / LMG 22146 / PsJN) (Burkholderia phytofirmans).